The following is a 401-amino-acid chain: Na(+)/H(+) antiporter NhaA 2 (401 aa).

11 consecutive transmembrane segments (helical) span residues 13-33 (AAGG…ANSP), 59-79 (LLLW…GLEV), 94-114 (ITLP…IYVW), 125-145 (GWAI…TIFG), 154-174 (LFLL…IALF), 178-198 (DLST…FLLN), 209-229 (VLIG…ATLA), 260-280 (WVGF…SLFG), 292-312 (LGIA…VCWI), 332-352 (GVSL…SLAF), and 363-383 (VKAG…VLLA).

Belongs to the NhaA Na(+)/H(+) (TC 2.A.33) antiporter family.

It is found in the cell inner membrane. It catalyses the reaction Na(+)(in) + 2 H(+)(out) = Na(+)(out) + 2 H(+)(in). In terms of biological role, na(+)/H(+) antiporter that extrudes sodium in exchange for external protons. The polypeptide is Na(+)/H(+) antiporter NhaA 2 (Pseudoalteromonas atlantica (strain T6c / ATCC BAA-1087)).